We begin with the raw amino-acid sequence, 144 residues long: Large ribosomal subunit protein uL16 (144 aa).

This sequence belongs to the universal ribosomal protein uL16 family. As to quaternary structure, part of the 50S ribosomal subunit.

Its function is as follows. Binds 23S rRNA and is also seen to make contacts with the A and possibly P site tRNAs. The sequence is that of Large ribosomal subunit protein uL16 from Porphyromonas gingivalis (strain ATCC 33277 / DSM 20709 / CIP 103683 / JCM 12257 / NCTC 11834 / 2561).